The following is a 384-amino-acid chain: Probable peptidoglycan glycosyltransferase FtsW (384 aa).

Over 1 to 19 (MAAVWRWFVPERPSFYDRG) the chain is Cytoplasmic. The chain crosses the membrane as a helical span at residues 20–40 (LLALTFSLMGIGLMMVASASI). Over 41–54 (KEGPGGDMFYFTKR) the chain is Periplasmic. The helical transmembrane segment at 55–75 (HLIFLFVCLGIGVGTLYLPLE) threads the bilayer. Residues 76 to 83 (RWREWSGR) lie on the Cytoplasmic side of the membrane. The chain crosses the membrane as a helical span at residues 84–104 (LLVGALGLLFAVLAVGRTVNG). Topologically, residues 105 to 110 (AKRWIG) are periplasmic. Residues 111 to 131 (FGFFNIQPAELAKLALIVFIA) form a helical membrane-spanning segment. Residues 132–143 (SYLVRRSDEVRG) lie on the Cytoplasmic side of the membrane. Residues 144-164 (NIAGFVKPLAVVFLLAIMLLA) traverse the membrane as a helical segment. Over 165-166 (QP) the chain is Periplasmic. A helical transmembrane segment spans residues 167-187 (DLGSVVVLFVCTFGLLFIGGA). Residue lysine 188 is a topological domain, cytoplasmic. A helical membrane pass occupies residues 189-209 (LVQFIAIIVAGLSALAGLIIY). Residues 210 to 267 (EPYRLRRVTSFLDPWADPFGSGYQLTQSLMAFGRGGFFGQGLGNSVQKLSYLPEAHTD) lie on the Periplasmic side of the membrane. Residues 268–288 (FVFAILGEELGYFGVLVVLFL) form a helical membrane-spanning segment. Over 289–316 (QLLLAMKALQIGRTALLRSKFFEGYMAC) the chain is Cytoplasmic. The helical transmembrane segment at 317 to 337 (GIGIWFSFQTVVNVGAAAGML) threads the bilayer. Over 338-343 (PTKGLT) the chain is Periplasmic. Residues 344–364 (LPLVSYGGSSLIAITMAVAIL) traverse the membrane as a helical segment. Residues 365-384 (LRIDFERRLDTSHVIQREAA) are Cytoplasmic-facing.

The protein belongs to the SEDS family. FtsW subfamily.

It localises to the cell inner membrane. The enzyme catalyses [GlcNAc-(1-&gt;4)-Mur2Ac(oyl-L-Ala-gamma-D-Glu-L-Lys-D-Ala-D-Ala)](n)-di-trans,octa-cis-undecaprenyl diphosphate + beta-D-GlcNAc-(1-&gt;4)-Mur2Ac(oyl-L-Ala-gamma-D-Glu-L-Lys-D-Ala-D-Ala)-di-trans,octa-cis-undecaprenyl diphosphate = [GlcNAc-(1-&gt;4)-Mur2Ac(oyl-L-Ala-gamma-D-Glu-L-Lys-D-Ala-D-Ala)](n+1)-di-trans,octa-cis-undecaprenyl diphosphate + di-trans,octa-cis-undecaprenyl diphosphate + H(+). The protein operates within cell wall biogenesis; peptidoglycan biosynthesis. Peptidoglycan polymerase that is essential for cell division. The protein is Probable peptidoglycan glycosyltransferase FtsW of Tolumonas auensis (strain DSM 9187 / NBRC 110442 / TA 4).